We begin with the raw amino-acid sequence, 165 residues long: UPF0254 protein MmarC6_1720 (165 aa).

It belongs to the UPF0254 family.

The sequence is that of UPF0254 protein MmarC6_1720 from Methanococcus maripaludis (strain C6 / ATCC BAA-1332).